The chain runs to 741 residues: Methionine--tRNA ligase (741 aa).

The segment covering 1–22 has biased composition (polar residues); it reads MTMKQYTMSKMNAETQTQTRES. The disordered stretch occupies residues 1-25; the sequence is MTMKQYTMSKMNAETQTQTRESFPT. Residues 36 to 46 carry the 'HIGH' region motif; it reads PYANGDLHIGH. Positions 167, 170, 179, and 183 each coordinate Zn(2+). Residues 309-329 are disordered; the sequence is VRSHSSSSAKDSSEGNSPSNI. Positions 311–329 are enriched in low complexity; the sequence is SHSSSSAKDSSEGNSPSNI. Thr381 is a binding site for ATP. The disordered stretch occupies residues 591–629; that stretch reads KLADRVTDPTDDDDSDTDTETGTDVAETTNESHSESNMT. Residues 599–611 show a composition bias toward acidic residues; that stretch reads PTDDDDSDTDTET. Polar residues predominate over residues 616–629; the sequence is AETTNESHSESNMT. The region spanning 643 to 741 is the tRNA-binding domain; sequence EFEELDLRVA…EDADPGTSIQ (99 aa).

Belongs to the class-I aminoacyl-tRNA synthetase family. MetG type 1 subfamily. In terms of assembly, homodimer. Zn(2+) serves as cofactor.

It localises to the cytoplasm. It carries out the reaction tRNA(Met) + L-methionine + ATP = L-methionyl-tRNA(Met) + AMP + diphosphate. Is required not only for elongation of protein synthesis but also for the initiation of all mRNA translation through initiator tRNA(fMet) aminoacylation. This Haloquadratum walsbyi (strain DSM 16790 / HBSQ001) protein is Methionine--tRNA ligase.